Reading from the N-terminus, the 1475-residue chain is Amylopullulanase (1475 aa).

The N-terminal stretch at methionine 1 to alanine 31 is a signal peptide. Residues aspartate 245, asparagine 247, aspartate 285, aspartate 340, asparagine 398, aspartate 400, asparagine 403, aspartate 404, glycine 449, and aspartate 451 each contribute to the Ca(2+) site. The substrate site is built by histidine 524 and arginine 627. The active-site Nucleophile is the aspartate 629. The active-site Proton donor is the glutamate 658. Substrate is bound by residues histidine 734–aspartate 735, aspartate 794, and arginine 798. 2 consecutive Fibronectin type-III domains span residues alanine 928 to proline 1019 and threonine 1164 to isoleucine 1257. A CBM20 domain is found at proline 1255–aspartate 1362.

The protein belongs to the glycosyl hydrolase 13 family. Ca(2+) serves as cofactor.

The catalysed reaction is Endohydrolysis of (1-&gt;4)-alpha-D-glucosidic linkages in polysaccharides containing three or more (1-&gt;4)-alpha-linked D-glucose units.. It catalyses the reaction Hydrolysis of (1-&gt;6)-alpha-D-glucosidic linkages in pullulan, amylopectin and glycogen, and in the alpha- and beta-limit dextrins of amylopectin and glycogen.. This Thermoanaerobacter thermohydrosulfuricus (Clostridium thermohydrosulfuricum) protein is Amylopullulanase (apu).